The following is a 358-amino-acid chain: Peptide chain release factor 1 (358 aa).

An N5-methylglutamine modification is found at Q235.

It belongs to the prokaryotic/mitochondrial release factor family. Methylated by PrmC. Methylation increases the termination efficiency of RF1.

It is found in the cytoplasm. Peptide chain release factor 1 directs the termination of translation in response to the peptide chain termination codons UAG and UAA. The protein is Peptide chain release factor 1 of Neisseria meningitidis serogroup C (strain 053442).